The following is a 326-amino-acid chain: Prenyl transferase nodC (326 aa).

A helical membrane pass occupies residues 8-28 (LAAVLFSALFSLGVILVHLPW). Histidine 95 serves as a coordination point for isopentenyl diphosphate. Residues aspartate 102 and aspartate 106 each contribute to the Mg(2+) site. Arginine 111 is a dimethylallyl diphosphate binding site. Asparagine 139 carries N-linked (GlcNAc...) asparagine glycosylation. Lysine 195 serves as a coordination point for dimethylallyl diphosphate. Residue asparagine 210 is glycosylated (N-linked (GlcNAc...) asparagine).

Belongs to the FPP/GGPP synthase family.

The protein resides in the membrane. It functions in the pathway secondary metabolite biosynthesis. Functionally, cytochrome P450 monooxygenase; part of the gene cluster that mediates the biosynthesis of the indole diterpenes nodulisporic acids (NA). Nodulisporic acid A (NAA) and its chemically modified derivatives are of particular significance because of their highly potent insecticidal activity against blood-feeding arthropods and lack of observable adverse effects on mammals, in particular the tremogenicity associated with the paspaline-derived IDTs is not observed. The geranylgeranyl diphosphate (GGPP) synthase ggs1, localized outside of the cluster, is proposed to catalyze the first step in nodulisporic acid biosynthesis via conversion of farnesyl pyrophosphate and isopentyl pyrophosphate into geranylgeranyl pyrophosphate (GGPP). Condensation of indole-3-glycerol phosphate with GGPP by the prenyl transferase nodC then forms 3-geranylgeranylindole (3-GGI). Epoxidation by the FAD-dependent monooxygenase nodM leads to a single-epoxidized-GGI that is substrate of the terpene cyclase nodB for cyclization to yield emindole SB. The terminal methyl carbon, C28, of emindole SB is then oxidized by the cytochrome P450 monooxygenase nodW to produce nodulisporic acid F (NAF), the pentacyclic core of NAA. NAF is converted to nodulisporic acid E (NAE) via prenylation. This step is probably performed by one of the indole diterpene prenyltransferases nodD1 or nodD2. Several oxidation steps performed by the FAD-linked oxidoreductase nodO and one of the cytochrome P450 monooxygenase nodR, nodX or nodZ further convert NAE to nodulisporic acid D (NAD). NAD is substrate of cytochrome P450 monooxygenase nodJ to produce the precursor of nodulisporic acid C (NAC), converted to NAC by one of the indole diterpene prenyltransferases nodD1 or nodD2. The FAD-dependent monooxygenase nodY2 then oxidizes NAC to nodulisporic acid B (NAB). Finally NAB is converted to NAA by one of the cytochrome P450 monooxygenases nodR, nodX or nodZ. The polypeptide is Prenyl transferase nodC (Hypoxylon pulicicidum).